Here is a 599-residue protein sequence, read N- to C-terminus: NTPase KAP family P-loop domain-containing protein 1 (599 aa).

Residues 1 to 416 form the KAP NTPase domain; the sequence is MQQEAAQRES…NTVPITVRLL (416 aa). 3 helical membrane passes run 25 to 45, 119 to 139, and 156 to 176; these read GWGV…ITEL, VCLA…LLYL, and ALGG…VYSV. Positions 543 to 599 are disordered; sequence ALKPPSPPKSPSQDGPQASPRAIIAAGTSHAGQGSGHSKEAHQTRDRTHGGKPRPMA. The span at 579 to 591 shows a compositional bias: basic and acidic residues; the sequence is HSKEAHQTRDRTH.

The protein resides in the membrane. The chain is NTPase KAP family P-loop domain-containing protein 1 (Nkpd1) from Mus musculus (Mouse).